The chain runs to 272 residues: HMP-PP phosphatase (272 aa).

The Nucleophile role is filled by Asp-8. The Mg(2+) site is built by Asp-8, Asp-10, and Asp-212.

The protein belongs to the HAD-like hydrolase superfamily. Cof family. Mg(2+) is required as a cofactor.

It carries out the reaction 4-amino-2-methyl-5-(diphosphooxymethyl)pyrimidine + H2O = 4-amino-2-methyl-5-(phosphooxymethyl)pyrimidine + phosphate + H(+). Functionally, catalyzes the hydrolysis of 4-amino-2-methyl-5-hydroxymethylpyrimidine pyrophosphate (HMP-PP) to 4-amino-2-methyl-5-hydroxymethylpyrimidine phosphate (HMP-P). The protein is HMP-PP phosphatase of Escherichia fergusonii (strain ATCC 35469 / DSM 13698 / CCUG 18766 / IAM 14443 / JCM 21226 / LMG 7866 / NBRC 102419 / NCTC 12128 / CDC 0568-73).